We begin with the raw amino-acid sequence, 169 residues long: uncharacterized protein (169 aa).

The Nudix hydrolase domain maps to 28–157; that stretch reads ELHLVIHVCI…EFIPYFFLNQ (130 aa). Residues 65–87 carry the Nudix box motif; that stretch reads AGSALKGETSQQAAEREVQEELG. Mg(2+)-binding residues include Glu81 and Glu85.

Belongs to the Nudix hydrolase family. Requires Mg(2+) as cofactor.

This is an uncharacterized protein from Listeria monocytogenes serovar 1/2a (strain ATCC BAA-679 / EGD-e).